The sequence spans 333 residues: NAC domain-containing protein 26 (333 aa).

The NAC domain maps to 14-173; sequence LPPGFRFHPT…DWAVCRIFHK (160 aa). Residues 114-179 mediate DNA binding; sequence IGMKKTLVFY…IFHKSSGIKK (66 aa). A disordered region spans residues 143–162; the sequence is ADASPPQPPPPPSSAEPPRQ. Residues 147-157 show a composition bias toward pro residues; it reads PPQPPPPPSSA.

In terms of assembly, forms homodimers. Forms heterodimers with NAC20. Forms heterodimers with NAC23. As to expression, expressed in developing seeds.

The protein resides in the nucleus. Transcription factor that acts redundantly with NAC20 to regulate the expression of genes involved in the biosynthesis of starch and storage proteins in grain. Directly binds to the promoters of starch synthase 1 (SS1), pullulanase (PUL), glutelin A1 (GLUA1), glutelins B4 and B5 (GLUB4 and GLUB5), alpha-globulin and 16 kDa prolamin, and activates their expression. Possesses transactivation activity in yeast. This Oryza sativa subsp. indica (Rice) protein is NAC domain-containing protein 26.